A 159-amino-acid chain; its full sequence is Ribosomal RNA large subunit methyltransferase H (159 aa).

S-adenosyl-L-methionine contacts are provided by residues L76, G108, and 127–132 (FSKMTF).

It belongs to the RNA methyltransferase RlmH family. As to quaternary structure, homodimer.

It is found in the cytoplasm. It carries out the reaction pseudouridine(1915) in 23S rRNA + S-adenosyl-L-methionine = N(3)-methylpseudouridine(1915) in 23S rRNA + S-adenosyl-L-homocysteine + H(+). Its function is as follows. Specifically methylates the pseudouridine at position 1915 (m3Psi1915) in 23S rRNA. This Bifidobacterium longum subsp. infantis (strain ATCC 15697 / DSM 20088 / JCM 1222 / NCTC 11817 / S12) protein is Ribosomal RNA large subunit methyltransferase H.